Reading from the N-terminus, the 1213-residue chain is DNA-directed RNA polymerase subunit beta' (1213 aa).

4 residues coordinate Zn(2+): cysteine 60, cysteine 62, cysteine 75, and cysteine 78. Mg(2+) contacts are provided by aspartate 450, aspartate 452, and aspartate 454. The Zn(2+) site is built by cysteine 819, cysteine 893, cysteine 900, and cysteine 903.

It belongs to the RNA polymerase beta' chain family. The RNAP catalytic core consists of 2 alpha, 1 beta, 1 beta' and 1 omega subunit. When a sigma factor is associated with the core the holoenzyme is formed, which can initiate transcription. Mg(2+) is required as a cofactor. The cofactor is Zn(2+).

The catalysed reaction is RNA(n) + a ribonucleoside 5'-triphosphate = RNA(n+1) + diphosphate. Its function is as follows. DNA-dependent RNA polymerase catalyzes the transcription of DNA into RNA using the four ribonucleoside triphosphates as substrates. The sequence is that of DNA-directed RNA polymerase subunit beta' from Streptococcus pyogenes serotype M28 (strain MGAS6180).